Consider the following 388-residue polypeptide: Probable proton-coupled zinc antiporter SLC30A3 (388 aa).

Positions methionine 1–proline 42 are disordered. Topologically, residues methionine 1–glutamine 75 are cytoplasmic. A phosphoserine mark is found at serine 63 and serine 66. The helical transmembrane segment at leucine 76–leucine 96 threads the bilayer. Residues alanine 97 to aspartate 105 are Lumenal-facing. Residues alanine 106–serine 126 form a helical membrane-spanning segment. Positions 108 and 112 each coordinate Zn(2+). Over threonine 127–glycine 145 the chain is Cytoplasmic. The chain crosses the membrane as a helical span at residues alanine 146–leucine 166. Residues arginine 167–alanine 177 lie on the Lumenal side of the membrane. The helical transmembrane segment at glycine 178–leucine 198 threads the bilayer. Over histidine 199–alanine 235 the chain is Cytoplasmic. Residues phenylalanine 236 to isoleucine 256 traverse the membrane as a helical segment. Histidine 238 and aspartate 242 together coordinate Zn(2+). The Lumenal portion of the chain corresponds to tyrosine 257–lysine 263. Residues valine 264–threonine 284 form a helical membrane-spanning segment. At leucine 285–alanine 388 the chain is on the cytoplasmic side.

It belongs to the cation diffusion facilitator (CDF) transporter (TC 2.A.4) family. SLC30A subfamily. Homodimer. Homodimerization could regulate efficiency of zinc transport. Interacts with TMEM163.

It localises to the cytoplasmic vesicle. The protein resides in the secretory vesicle. The protein localises to the synaptic vesicle membrane. Its subcellular location is the synapse. It is found in the synaptosome. It localises to the late endosome membrane. The protein resides in the lysosome membrane. It catalyses the reaction Zn(2+)(in) + 2 H(+)(out) = Zn(2+)(out) + 2 H(+)(in). In terms of biological role, probable proton-coupled zinc ion antiporter mediating the import of zinc from cytoplasm into synaptic vesicles and participating to cellular zinc ion homeostasis in the brain. This is Probable proton-coupled zinc antiporter SLC30A3 from Rattus norvegicus (Rat).